The chain runs to 280 residues: Orotidine 5'-phosphate decarboxylase (280 aa).

Substrate contacts are provided by residues aspartate 40, 62–64 (KTH), 93–102 (DRKFVDIGNT), tyrosine 228, and arginine 246. Residue lysine 95 is the Proton donor of the active site.

The protein belongs to the OMP decarboxylase family.

It catalyses the reaction orotidine 5'-phosphate + H(+) = UMP + CO2. It participates in pyrimidine metabolism; UMP biosynthesis via de novo pathway; UMP from orotate: step 2/2. The sequence is that of Orotidine 5'-phosphate decarboxylase (PYRG) from Solorina crocea.